A 418-amino-acid chain; its full sequence is Triacylglycerol lipase 2 (418 aa).

The N-terminal stretch at 1 to 31 (MAGSVMVPSVSIGLALSVLIFFALSLKTLEA) is a signal peptide. The N-linked (GlcNAc...) asparagine glycan is linked to Asn158. Ser190 functions as the Nucleophile in the catalytic mechanism. Asn286 and Asn342 each carry an N-linked (GlcNAc...) asparagine glycan. Catalysis depends on charge relay system residues Asp360 and His393.

It belongs to the AB hydrolase superfamily. Lipase family.

The protein localises to the secreted. It catalyses the reaction a triacylglycerol + H2O = a diacylglycerol + a fatty acid + H(+). Its function is as follows. Triacylglycerol (TAG) lipase. May be involved for TAG storage breakdown during seed germination. The protein is Triacylglycerol lipase 2 (LIP2) of Arabidopsis thaliana (Mouse-ear cress).